Consider the following 537-residue polypeptide: MWSSWAWTWSWSGAAAVAVAAAAAWVAVYAAAARAAEALWWRPRRVERHFAAQGVRGPGYRFFVGSSIELVRLMVDAASRPMEPPTSHDILPRVLPFYHHWRKLYGPMHLIWFGRTPRLVVSEPELIREVLLTRADHFDRYEAHPMICQFEGYGLSNLHGERWARRRRVLTPAFHTENLRMIAPFVAGTVTRMLDELAERARAGGAGEAEVDVAEWFQRVPQEAITFAAFGRRNYDDGAAVFRLQDELAGYATEAHSKVYIPGYRFLPTRKNRRVWQLDREIRSHLAKFVTGLQSCSSSHGDDADDGGDGGGGMREFMSFMAPAMTAGEIIEESKNFFFAGKETLSNLLTWTTVALAMHPEWQERARREVVAVCGRGDLPTKDHLPKLKTLGMILNETLRLYPPAVAMIRTAKEDVELGGCVVPAGTEVMIPIMAVHHDAAAWGDDAAEFNPARFAADDDGGRRRHPMAFMPFGGGARVCIGQNMALMEAKVALAVVLRRFEFRLSPAYVHAPRVLMILSPQFGAPVIFRPLTSAAA.

A helical transmembrane segment spans residues 13–33 (GAAAVAVAAAAAWVAVYAAAA). C480 contacts heme.

This sequence belongs to the cytochrome P450 family. Heme is required as a cofactor. As to expression, exclusively expressed in roots.

It localises to the membrane. Cytochrome P450 probably involved in brassinosteroids (BRs) inactivation and regulation of BRs homeostasis. The protein is Cytochrome P450 734A5 (CYP734A5) of Oryza sativa subsp. japonica (Rice).